We begin with the raw amino-acid sequence, 267 residues long: uncharacterized protein (267 aa).

2 positions are modified to phosphoserine: Ser-210 and Ser-224.

In terms of tissue distribution, testis. Down-regulated in men with spermatocyte arrest.

Essential for normal spermatogenesis and male fertility. This is an uncharacterized protein from Homo sapiens (Human).